Reading from the N-terminus, the 2073-residue chain is Dedicator of cytokinesis protein 11 (2073 aa).

At serine 12 the chain carries Phosphoserine. The residue at position 16 (threonine 16) is a Phosphothreonine. Serine 23 and serine 161 each carry phosphoserine. One can recognise a PH domain in the interval 165-272 (GVIKQGWLHK…WLIMLKKIIQ (108 aa)). At tyrosine 248 the chain carries Phosphotyrosine. A phosphoserine mark is found at serine 306 and serine 445. In terms of domain architecture, C2 DOCK-type spans 640–818 (KNHLYVYPLQ…PLLKIKTHLE (179 aa)). The interval 1227-1267 (QNGHGIKREDSRGSLIPEGATGFPDPGSTSENTRQSSSRSS) is disordered. 2 positions are modified to phosphoserine: serine 1237 and serine 1240. Positions 1254–1267 (STSENTRQSSSRSS) are enriched in low complexity. Residues 1609–2036 (KSYASTPELR…LSDIIHEQIL (428 aa)) enclose the DOCKER domain.

The protein belongs to the DOCK family. Interacts with CDC42. Expressed in spleen, thymus, mesenteric lymph nodes (MLN), bone marrow and peripheral blood lymphocytes. Enriched in B-cells from germinal centers. Expressed in B-, T- and dendritic cells as well as Purkinje cells.

Functionally, guanine nucleotide-exchange factor (GEF) that activates CDC42 by exchanging bound GDP for free GTP. Required for marginal zone (MZ) B-cell development, is associated with early bone marrow B-cell development, MZ B-cell formation, MZ B-cell number and marginal metallophilic macrophages morphology. Facilitates filopodia formation through the activation of CDC42. The sequence is that of Dedicator of cytokinesis protein 11 from Mus musculus (Mouse).